The primary structure comprises 361 residues: Phospho-N-acetylmuramoyl-pentapeptide-transferase (361 aa).

The next 10 membrane-spanning stretches (helical) occupy residues 25 to 45, 73 to 93, 97 to 117, 134 to 154, 168 to 188, 200 to 220, 237 to 257, 264 to 284, 289 to 309, and 338 to 358; these read RTVLAALTALIISFIVGPAMI, TMGGALILVSIAITTLLWADL, YVWIVLITTLGFGMIGWVDDY, LFWQSAIAILVALYLVLTAEL, VAVPLGVTGFVALTYFVIVGT, GLAIMPTVMISSALAIFSYVA, AGELAVFCGALAGAGLAFLWF, VFMGDVGALALGAALGIVTVI, IVMLIMGGVFVVETLSVMLQV, and QVVVRFWIITMMLVLFGLSSL.

It belongs to the glycosyltransferase 4 family. MraY subfamily. Mg(2+) is required as a cofactor.

The protein resides in the cell inner membrane. It carries out the reaction UDP-N-acetyl-alpha-D-muramoyl-L-alanyl-gamma-D-glutamyl-meso-2,6-diaminopimeloyl-D-alanyl-D-alanine + di-trans,octa-cis-undecaprenyl phosphate = di-trans,octa-cis-undecaprenyl diphospho-N-acetyl-alpha-D-muramoyl-L-alanyl-D-glutamyl-meso-2,6-diaminopimeloyl-D-alanyl-D-alanine + UMP. It participates in cell wall biogenesis; peptidoglycan biosynthesis. Functionally, catalyzes the initial step of the lipid cycle reactions in the biosynthesis of the cell wall peptidoglycan: transfers peptidoglycan precursor phospho-MurNAc-pentapeptide from UDP-MurNAc-pentapeptide onto the lipid carrier undecaprenyl phosphate, yielding undecaprenyl-pyrophosphoryl-MurNAc-pentapeptide, known as lipid I. The sequence is that of Phospho-N-acetylmuramoyl-pentapeptide-transferase from Nitrosospira multiformis (strain ATCC 25196 / NCIMB 11849 / C 71).